We begin with the raw amino-acid sequence, 130 residues long: Small ribosomal subunit protein uS11 (130 aa).

It belongs to the universal ribosomal protein uS11 family. As to quaternary structure, part of the 30S ribosomal subunit. Interacts with proteins S7 and S18. Binds to IF-3.

Located on the platform of the 30S subunit, it bridges several disparate RNA helices of the 16S rRNA. Forms part of the Shine-Dalgarno cleft in the 70S ribosome. The protein is Small ribosomal subunit protein uS11 of Pseudoalteromonas atlantica (strain T6c / ATCC BAA-1087).